Consider the following 200-residue polypeptide: NAD(P)H dehydrogenase (quinone) (200 aa).

Positions 4–191 constitute a Flavodoxin-like domain; that stretch reads VLVLYYSSYG…DIARYQGKHV (188 aa). FMN contacts are provided by residues 10-15 and 79-81; these read SSYGHV and TRF. Tyrosine 12 is an NAD(+) binding site. Residue tryptophan 99 coordinates substrate. FMN contacts are provided by residues 114 to 120 and histidine 135; that span reads STGTQHG.

This sequence belongs to the WrbA family. FMN is required as a cofactor.

It carries out the reaction a quinone + NADH + H(+) = a quinol + NAD(+). The enzyme catalyses a quinone + NADPH + H(+) = a quinol + NADP(+). The protein is NAD(P)H dehydrogenase (quinone) of Burkholderia cenocepacia (strain HI2424).